The primary structure comprises 312 residues: RNA-binding protein Raly (312 aa).

Ser2 is subject to N-acetylserine. Residue Lys4 forms a Glycyl lysine isopeptide (Lys-Gly) (interchain with G-Cter in SUMO2) linkage. Positions 21-92 constitute an RRM domain; it reads SRVFIGNLNT…QTLDINMAGE (72 aa). Lys44 is modified (N6-acetyllysine). Glycyl lysine isopeptide (Lys-Gly) (interchain with G-Cter in SUMO2) cross-links involve residues Lys94 and Lys99. Ser135 carries the phosphoserine modification. Lys159 is covalently cross-linked (Glycyl lysine isopeptide (Lys-Gly) (interchain with G-Cter in SUMO2)). Lys165 is subject to N6-acetyllysine; alternate. A Glycyl lysine isopeptide (Lys-Gly) (interchain with G-Cter in SUMO2); alternate cross-link involves residue Lys165. Residues Lys179 and Lys191 each participate in a glycyl lysine isopeptide (Lys-Gly) (interchain with G-Cter in SUMO2) cross-link. A coiled-coil region spans residues 184–216; that stretch reads SSELQTIKTELTQIKSNIDALLGRLEQIAEEQK. Over residues 214-226 the composition is skewed to basic and acidic residues; that stretch reads EQKANPDGKKKGD. The segment at 214 to 312 is disordered; sequence EQKANPDGKK…DTDAEDGALQ (99 aa). The span at 228–253 shows a compositional bias: gly residues; that stretch reads SSGGGGGSSGGGGSSNVGGGSSGGSG. Residue Thr268 is modified to Phosphothreonine. A Phosphoserine modification is found at Ser270. A phosphothreonine mark is found at Thr274 and Thr292. The segment covering 293 to 303 has biased composition (basic and acidic residues); sequence HSEEELEHSQD. Residues Ser294 and Ser301 each carry the phosphoserine modification. At Thr304 the chain carries Phosphothreonine.

Belongs to the RRM HNRPC family. RALY subfamily. In terms of assembly, identified in the spliceosome C complex. Interacts (through its RNA-binding domain) with FUS (through its RNA-binding domain); both are components of the same RNPs. Widely expressed. Expressed in brain, testis, lung, spleen and kidney. Weakly expressed in liver.

Its subcellular location is the nucleus. In terms of biological role, RNA-binding protein that acts as a transcriptional cofactor for cholesterol biosynthetic genes in the liver. Binds the lipid-responsive non-coding RNA LeXis and is required for LeXis-mediated effect on cholesterogenesis. May be a heterogeneous nuclear ribonucleoprotein (hnRNP). The chain is RNA-binding protein Raly (Raly) from Mus musculus (Mouse).